The primary structure comprises 286 residues: Putative quercetin 2,3-dioxygenase PA2418 (286 aa).

The a divalent metal cation site is built by histidine 61, histidine 63, histidine 105, and glutamate 107.

It belongs to the pirin family. Requires a divalent metal cation as cofactor.

It catalyses the reaction quercetin + O2 = 2-(3,4-dihydroxybenzoyloxy)-4,6-dihydroxybenzoate + CO. It functions in the pathway flavonoid metabolism; quercetin degradation. Putative quercetin 2,3-dioxygenase. This Pseudomonas aeruginosa (strain ATCC 15692 / DSM 22644 / CIP 104116 / JCM 14847 / LMG 12228 / 1C / PRS 101 / PAO1) protein is Putative quercetin 2,3-dioxygenase PA2418.